The primary structure comprises 551 residues: Chaperonin GroEL (551 aa).

Residues 29–32 (TAGP), Lys-50, 86–90 (DGTTT), Gly-417, and Asp-499 each bind ATP.

Belongs to the chaperonin (HSP60) family. As to quaternary structure, forms a cylinder of 14 subunits composed of two heptameric rings stacked back-to-back. Interacts with the co-chaperonin GroES.

Its subcellular location is the cytoplasm. The enzyme catalyses ATP + H2O + a folded polypeptide = ADP + phosphate + an unfolded polypeptide.. Together with its co-chaperonin GroES, plays an essential role in assisting protein folding. The GroEL-GroES system forms a nano-cage that allows encapsulation of the non-native substrate proteins and provides a physical environment optimized to promote and accelerate protein folding. This chain is Chaperonin GroEL, found in Ehrlichia ruminantium (strain Gardel).